The primary structure comprises 433 residues: Phosphomethylpyrimidine synthase (433 aa).

Substrate-binding positions include N69, M98, Y127, H163, 185–187 (SRG), 226–229 (DALR), and E265. H269 lines the Zn(2+) pocket. Y292 provides a ligand contact to substrate. Residue H333 coordinates Zn(2+). 3 residues coordinate [4Fe-4S] cluster: C409, C412, and C416.

The protein belongs to the ThiC family. [4Fe-4S] cluster serves as cofactor.

It carries out the reaction 5-amino-1-(5-phospho-beta-D-ribosyl)imidazole + S-adenosyl-L-methionine = 4-amino-2-methyl-5-(phosphooxymethyl)pyrimidine + CO + 5'-deoxyadenosine + formate + L-methionine + 3 H(+). It functions in the pathway cofactor biosynthesis; thiamine diphosphate biosynthesis. In terms of biological role, catalyzes the synthesis of the hydroxymethylpyrimidine phosphate (HMP-P) moiety of thiamine from aminoimidazole ribotide (AIR) in a radical S-adenosyl-L-methionine (SAM)-dependent reaction. This Finegoldia magna (strain ATCC 29328 / DSM 20472 / WAL 2508) (Peptostreptococcus magnus) protein is Phosphomethylpyrimidine synthase.